The primary structure comprises 99 residues: UPF0751 protein BCAH820_B0138 (99 aa).

It belongs to the UPF0751 family.

This chain is UPF0751 protein BCAH820_B0138, found in Bacillus cereus (strain AH820).